Reading from the N-terminus, the 882-residue chain is MTKQLTLFDIPSSKPAKSEQNTQQSQQSAPVEEKKVVRREWLEEAQENKIYFLLQVDYDGKKGKAVCKLFDKETQKIYALYDNTGHKPYFLVDLEPDKVGKIPKIVRDPSFDHIETVSKIDPYTWNKFKLTKIVVRDPLAVRRLRNDVPKAYEAHIKYFNNYMYDIGLIPGMPYVVKNGKLESVYLSLDEKDVEEIKKAFADSDEMTRQMAVDWLPIFETEIPKIKRVAIDIEVYTPVKGRIPDSQKAEFPIISIALAGSDGLKKVLVLNRNDVNEGSVKLDGISVERFNTEYELLGRFFDILLEYPIVLTFNGDDFDLPYIYFRALKLGYFPEEIPIDVAGKDEAKYLAGLHIDLYKFFFNKAVRNYAFEGKYNEYNLDAVAKALLGTSKVKVDTLISFLDVEKLIEYNFRDAEITLQLTTFNNDLTMKLIVLFSRISRLGIEELTRTEISTWVKNLYYWEHRKRNWLIPLKEEILAKSSNIRTSALIKGKGYKGAVVIDPPAGIFFNITVLDFASLYPSIIRTWNLSYETVDIQQCKKPYEVKDETGEVLHIVCMDRPGITAVITGLLRDFRVKIYKKKAKNPNNSEEQKLLYDVVQRAMKVFINATYGVFGAETFPLYAPAVAESVTALGRYVITSTVKKAREEGLTVLYGDTDSLFLLNPPKNSLENIIKWVKTTFNLDLEVDKTYKFVAFSGLKKNYFGVYQDGKVDIKGMLVKKRNTPEFVKKVFNEVKELMISINSPNDVKEIKRKIVDVVKGSYEKLKNKGYNLDELAFKVMLSKPLDAYKKNTPQHVKAALQLRPFGVNVLPRDIIYYVKVRSKDGVKPVQLAKVTEIDAEKYLEALRSTFEQILRAFGVSWDEIAATMSIDSFFSYPSKGNS.

Residues 1–31 are disordered; it reads MTKQLTLFDIPSSKPAKSEQNTQQSQQSAPV. Positions 18–29 are enriched in polar residues; that stretch reads SEQNTQQSQQSA.

It belongs to the DNA polymerase type-B family. Interacts with PCNA subunit PCNA2 and weakly with PCNA3.

It catalyses the reaction DNA(n) + a 2'-deoxyribonucleoside 5'-triphosphate = DNA(n+1) + diphosphate. Its activity is regulated as follows. DNA synthesis is stimulated by PCNA heterotrimers. In terms of biological role, this polymerase possesses two enzymatic activities: DNA synthesis (polymerase) and an exonucleolytic activity that degrades single-stranded DNA in the 3'- to 5'-direction. DNA polymerase I, DNA ligase and the flap endonuclease may be constitutively associated with the PCNA heterotrimer forming a scanning complex able to couple DNA synthesis and Okazaki fragment maturation. The chain is DNA polymerase 1 (dpo1) from Saccharolobus solfataricus (strain ATCC 35092 / DSM 1617 / JCM 11322 / P2) (Sulfolobus solfataricus).